A 146-amino-acid polypeptide reads, in one-letter code: Spermidine export protein MdtJ (146 aa).

The next 4 membrane-spanning stretches (helical) occupy residues 1–21 (MIYW…TLSM), 31–51 (TGMI…AIAV), 54–74 (VALG…ITTF), and 76–96 (VLWF…MLIA).

It belongs to the drug/metabolite transporter (DMT) superfamily. Small multidrug resistance (SMR) (TC 2.A.7.1) family. MdtJ subfamily. In terms of assembly, forms a complex with MdtI.

It localises to the cell inner membrane. Functionally, catalyzes the excretion of spermidine. The chain is Spermidine export protein MdtJ from Proteus mirabilis (strain HI4320).